We begin with the raw amino-acid sequence, 543 residues long: MIENSFKMEMHFKNRWQAASLFLRYPRTVTLCLSGKSGDMDESVNLSTSMGDVEASMLNHNVSFSSTMVTSNGDLSLPKLSVTLSAEEILKLRSGRPKNAVESPHAGVPMETSLAAEEEANGDEEEESVRVVDIEDTLELTSNGNEAKPEDQELAIAPVLQYFQGALVELGRRCWTSSTEAQHYTKGCYWSPDGTCLLVPVHLDGMHVIEMPSDLYSADTVQPARSLTKLQSEVHVPEGGTVYDCVWYPHMNSLQPETCLWLATRQHEPIHMWDAFDGSLRCSYSGYDAVDEVMAAISLAFSHDGEQIYAGYKRCIKIFDTSRPGRFCDDYPVKFAISCIAQTTAHPHTLTCGNWHGYIQHFDLRCSHKQGPLFTLGGHKGGITQLRYGEFGNGEWHLFSGARKCDKILQWDMRNYKQPLVELQRHVDTNQRIQFDLASDSNWLASGDTRGFVNVWDLKKYGDPSVLPLHSDCCNGVALNPAMPILATSSGQFHFTDQSAQGDNVTLNGTETTELPAPADVNQNQKEVLYENAVVMWWCGQTG.

Residues 95 to 128 form a disordered region; sequence GRPKNAVESPHAGVPMETSLAAEEEANGDEEEES. A compositionally biased stretch (acidic residues) spans 116-127; it reads AEEEANGDEEEE. WD repeat units follow at residues 237-283, 291-329, and 378-421; these read PEGG…LRCS, DEVM…RFCD, and GHKG…QPLV.

It belongs to the TCAB1 family.

The protein resides in the nucleus. The protein localises to the cajal body. Functionally, RNA chaperone that plays a key role in Cajal body formation. Specifically recognizes and binds the Cajal body box (CAB box) present in both small Cajal body RNAs (scaRNAs). Probably acts by mediating localization of scaRNAs to Cajal bodies. This Drosophila melanogaster (Fruit fly) protein is Telomerase Cajal body protein 1 homolog.